The chain runs to 290 residues: Nitrogenase iron protein 1 (290 aa).

Residue 10–17 (GKGGIGKS) coordinates ATP. A [4Fe-4S] cluster-binding site is contributed by Cys98. ADP-ribosylarginine; by dinitrogenase reductase ADP-ribosyltransferase is present on Arg101. Cys133 is a binding site for [4Fe-4S] cluster.

It belongs to the NifH/BchL/ChlL family. In terms of assembly, homodimer. [4Fe-4S] cluster is required as a cofactor. In terms of processing, the reversible ADP-ribosylation of Arg-101 inactivates the nitrogenase reductase and regulates nitrogenase activity.

The catalysed reaction is N2 + 8 reduced [2Fe-2S]-[ferredoxin] + 16 ATP + 16 H2O = H2 + 8 oxidized [2Fe-2S]-[ferredoxin] + 2 NH4(+) + 16 ADP + 16 phosphate + 6 H(+). With respect to regulation, nitrogenase holoenzyme is subject to 'conformational protection' by FeSII; under oxidizing conditions FeSII binds to the holoenzyme and reversibly protects it from oxidation. Its function is as follows. The key enzymatic reactions in nitrogen fixation are catalyzed by the nitrogenase complex, which has 2 components: the iron protein (component 2) and a component 1 which is either a molybdenum-iron protein, a vanadium-iron, or an iron-iron protein. The chain is Nitrogenase iron protein 1 (nifH1) from Azotobacter vinelandii.